A 305-amino-acid chain; its full sequence is Syntaxin-123 (305 aa).

Residue Met1 is modified to N-acetylmethionine. The Cytoplasmic segment spans residues Met1–Trp278. Residues Val46–Glu66 are a coiled coil. The t-SNARE coiled-coil homology domain occupies Leu206–Ala268. Residues Ala279–Phe299 traverse the membrane as a helical; Anchor for type IV membrane protein segment. Residues Asn300–Pro305 are Vesicular-facing.

The protein belongs to the syntaxin family. As to quaternary structure, part of the t-SNARE complex. Expressed in tips of root hairs.

Its subcellular location is the membrane. Its function is as follows. Vesicle trafficking protein that functions in the secretory pathway. Acts in coordination with SYP132 to mediate tip-focused membrane trafficking for root hair tip growth. Functions in root hair elongation by forming SNARE complexes with VAMP721,VAMP722 or VAMP724. The polypeptide is Syntaxin-123 (Arabidopsis thaliana (Mouse-ear cress)).